The sequence spans 264 residues: S-adenosylmethionine decarboxylase proenzyme (264 aa).

The Schiff-base intermediate with substrate; via pyruvic acid role is filled by S111. S111 carries the post-translational modification Pyruvic acid (Ser); by autocatalysis. H116 functions as the Proton acceptor; for processing activity in the catalytic mechanism. C139 acts as the Proton donor; for catalytic activity in catalysis.

Belongs to the prokaryotic AdoMetDC family. Type 2 subfamily. In terms of assembly, heterooctamer of four alpha and four beta chains arranged as a tetramer of alpha/beta heterodimers. Pyruvate serves as cofactor. Is synthesized initially as an inactive proenzyme. Formation of the active enzyme involves a self-maturation process in which the active site pyruvoyl group is generated from an internal serine residue via an autocatalytic post-translational modification. Two non-identical subunits are generated from the proenzyme in this reaction, and the pyruvate is formed at the N-terminus of the alpha chain, which is derived from the carboxyl end of the proenzyme. The post-translation cleavage follows an unusual pathway, termed non-hydrolytic serinolysis, in which the side chain hydroxyl group of the serine supplies its oxygen atom to form the C-terminus of the beta chain, while the remainder of the serine residue undergoes an oxidative deamination to produce ammonia and the pyruvoyl group blocking the N-terminus of the alpha chain.

It carries out the reaction S-adenosyl-L-methionine + H(+) = S-adenosyl 3-(methylsulfanyl)propylamine + CO2. Its pathway is amine and polyamine biosynthesis; S-adenosylmethioninamine biosynthesis; S-adenosylmethioninamine from S-adenosyl-L-methionine: step 1/1. Functionally, catalyzes the decarboxylation of S-adenosylmethionine to S-adenosylmethioninamine (dcAdoMet), the propylamine donor required for the synthesis of the polyamines spermine and spermidine from the diamine putrescine. In Geobacillus thermodenitrificans (strain NG80-2), this protein is S-adenosylmethionine decarboxylase proenzyme.